Reading from the N-terminus, the 435-residue chain is Acetyltransferase atnC (435 aa).

3 helical membrane passes run 10-30, 40-60, and 68-88; these read AFAN…FLII, YFGI…APTL, and SFLA…LLIL. Asn-203 carries an N-linked (GlcNAc...) asparagine glycan. Transmembrane regions (helical) follow at residues 306–326, 333–353, and 370–390; these read FLVF…MGLS, IPYF…QAFY, and VVGF…YMFP. Asn-406 is a glycosylation site (N-linked (GlcNAc...) asparagine). The helical transmembrane segment at 407–427 threads the bilayer; sequence LTEVIGMPMMWGLLGTFGMLV.

It belongs to the wax synthase family.

It is found in the membrane. The protein operates within secondary metabolite biosynthesis; terpenoid biosynthesis. Functionally, acetyltransferase; part of the gene cluster that mediates the biosynthesis of the meroterpenoids arthripenoids. The pathway begins with the HR-PKS atnH that catalyzes two chain-extension steps to form a reduced triketide, which then primes the SAT domain in the NR-PKS atnG to initiate three more cycles of extension to give a linear hexaketide corresponding to the polyketide part of arthripenoids. The FAD-dependent monooxygenase atnJ then performs an oxidative decarboxylation at C11 of the atnH/atnG product, via an electrophilic aromatic hydroxylation with concomitant ipso-decarboxylation. The membrane-bound polyprenyl transferase atnF then introduces a farnesyl group before the FAD-dependent monooxygenase atnK functions as the first epoxidase on terminal C12'-C13' olefin, followed by a second epoxidation on C7'-C8' catalyzed by atnA. The terpene cyclase/mutase atnI then initiates the sequential tricyclic ring formation through protonation of the terminal epoxide and catalyzes the regioselective and stereoselective 6/6/6-tricyclic ring formation. The cytochrome P450 monooxygenase atnM is responsible for hydroxylating both C1' and C10'. The next steps may involve ketoreduction and acetyl transfer by the ketoreductase atnB and the acetyltransferase atnC, and lead to the production of arthripenoid B, the final biosynthetic product of the atn cluster. The hydroquinone moiety in arthripenoid B is prone to undergo spontaneous oxidation to afford a benzoquinone compound, a key intermediate for generating structure diversity. For instance, addition of a cysteine followed by ring contraction gives arthripenoid A, tautomerization gives the main product arthripenoid C, addition of a molecular of water or amine affords arthripenoid D or E, respectively, and loss of one water forms arthripenoid F. This chain is Acetyltransferase atnC, found in Arthrinium sp.